Here is a 213-residue protein sequence, read N- to C-terminus: Orotate phosphoribosyltransferase (213 aa).

5-phospho-alpha-D-ribose 1-diphosphate is bound at residue Lys26. 34-35 (FF) contacts orotate. 5-phospho-alpha-D-ribose 1-diphosphate contacts are provided by residues 72–73 (YK), Arg99, Lys100, Lys103, His105, and 124–132 (DDVITAGTA). Residues Thr128 and Arg156 each contribute to the orotate site.

This sequence belongs to the purine/pyrimidine phosphoribosyltransferase family. PyrE subfamily. Homodimer. Mg(2+) is required as a cofactor.

It carries out the reaction orotidine 5'-phosphate + diphosphate = orotate + 5-phospho-alpha-D-ribose 1-diphosphate. It participates in pyrimidine metabolism; UMP biosynthesis via de novo pathway; UMP from orotate: step 1/2. Its function is as follows. Catalyzes the transfer of a ribosyl phosphate group from 5-phosphoribose 1-diphosphate to orotate, leading to the formation of orotidine monophosphate (OMP). The sequence is that of Orotate phosphoribosyltransferase from Pseudomonas syringae pv. tomato (strain ATCC BAA-871 / DC3000).